We begin with the raw amino-acid sequence, 256 residues long: Coiled-coil domain-containing protein 90B, mitochondrial (256 aa).

Residues methionine 1–serine 42 constitute a mitochondrion transit peptide. A coiled-coil region spans residues alanine 106–alanine 164. A helical transmembrane segment spans residues threonine 231 to tryptophan 253.

It belongs to the CCDC90 family. In terms of assembly, interacts with MCU.

It is found in the mitochondrion membrane. The chain is Coiled-coil domain-containing protein 90B, mitochondrial (Ccdc90b) from Rattus norvegicus (Rat).